The chain runs to 459 residues: Vasoactive intestinal polypeptide receptor 1 (459 aa).

The first 30 residues, 1 to 30, serve as a signal peptide directing secretion; the sequence is MRPPSPPHVRWLCVLAGALACALRPAGSQA. Over 31–142 the chain is Extracellular; the sequence is ASPQHECEYL…EQQQTKFYNT (112 aa). 5 cysteine pairs are disulfide-bonded: cysteine 37/cysteine 209, cysteine 50/cysteine 72, cysteine 63/cysteine 105, cysteine 86/cysteine 122, and cysteine 216/cysteine 286. N-linked (GlcNAc...) asparagine glycosylation is found at asparagine 58, asparagine 69, and asparagine 100. The chain crosses the membrane as a helical span at residues 143–167; the sequence is VKTGYTIGYSLSLASLLVAMAILSL. Residues 168–175 are Cytoplasmic-facing; sequence FRKLHCTR. Residues 176 to 197 form a helical membrane-spanning segment; sequence NYIHMHLFMSFILRATAVFIKD. At 198–217 the chain is on the extracellular side; that stretch reads MALFNSGEIDHCSEASVGCK. Residues 218-242 form a helical membrane-spanning segment; the sequence is AAVVFFQYCVMANFFWLLVEGLYLY. Residues 243–255 lie on the Cytoplasmic side of the membrane; the sequence is TLLAVSFFSERKY. Residues 256–277 traverse the membrane as a helical segment; the sequence is FWGYILIGWGVPSVFITIWTVV. Topologically, residues 278 to 293 are extracellular; that stretch reads RIYFEDFGCWDTIINS. Asparagine 292 is a glycosylation site (N-linked (GlcNAc...) asparagine). Residues 294-318 form a helical membrane-spanning segment; that stretch reads SLWWIIKAPILLSILVNFVLFICII. Over 319–340 the chain is Cytoplasmic; the sequence is RILVQKLRPPDIGKNDSSPYSR. Residues 341–361 traverse the membrane as a helical segment; it reads LAKSTLLLIPLFGIHYVMFAF. Topologically, residues 362 to 369 are extracellular; the sequence is FPDNFKAQ. The chain crosses the membrane as a helical span at residues 370–393; that stretch reads VKMVFELVVGSFQGFVVAILYCFL. Over 394 to 459 the chain is Cytoplasmic; sequence NGEVQAELRR…SSFQAEVSLV (66 aa).

This sequence belongs to the G-protein coupled receptor 2 family. As to quaternary structure, interacts with ADCYAP1/PACAP; activated by both PACAP27 and PACAP38 neuropeptides. Interacts with VIP; the interaction results in VIPR1 activation. As to expression, in liver, lung, intestines, thymus and brain (mostly in the cerebral cortex and hippocampus).

Its subcellular location is the cell membrane. Its function is as follows. G protein-coupled receptor activated by the neuropeptides vasoactive intestinal peptide (VIP) and pituitary adenylate cyclase-activating polypeptide (ADCYAP1/PACAP). Binds VIP and both PACAP27 and PACAP38 bioactive peptides with the following order of ligand affinity VIP = PACAP27 &gt; PACAP38. Ligand binding causes a conformation change that triggers signaling via guanine nucleotide-binding proteins (G proteins) and modulates the activity of downstream effectors. Activates cAMP-dependent pathway. This chain is Vasoactive intestinal polypeptide receptor 1, found in Rattus norvegicus (Rat).